Here is a 353-residue protein sequence, read N- to C-terminus: Uroporphyrinogen decarboxylase (353 aa).

Substrate-binding positions include 33–37, Asp82, Tyr158, Ser213, and His332; that span reads RQAGR.

This sequence belongs to the uroporphyrinogen decarboxylase family. Homodimer.

It is found in the cytoplasm. It catalyses the reaction uroporphyrinogen III + 4 H(+) = coproporphyrinogen III + 4 CO2. The protein operates within porphyrin-containing compound metabolism; protoporphyrin-IX biosynthesis; coproporphyrinogen-III from 5-aminolevulinate: step 4/4. In terms of biological role, catalyzes the decarboxylation of four acetate groups of uroporphyrinogen-III to yield coproporphyrinogen-III. The chain is Uroporphyrinogen decarboxylase from Gluconobacter oxydans (strain 621H) (Gluconobacter suboxydans).